The primary structure comprises 369 residues: N-succinylamino acid racemase (369 aa).

Catalysis depends on K163, which acts as the Proton donor. 3 residues coordinate Mg(2+): D188, E213, and D238. K262 functions as the Proton acceptor in the catalytic mechanism.

This sequence belongs to the mandelate racemase/muconate lactonizing enzyme family. MenC type 2 subfamily. Homooctamer. Tetramer of dimers. Requires a divalent metal cation as cofactor.

It catalyses the reaction (1R,6R)-6-hydroxy-2-succinyl-cyclohexa-2,4-diene-1-carboxylate = 2-succinylbenzoate + H2O. Its function is as follows. Acts as a N-succinylamino acid racemase (NSAR) that catalyzes the racemization of N-succinyl-L-phenylglycine. Also converts 2-succinyl-6-hydroxy-2,4-cyclohexadiene-1-carboxylate (SHCHC) to 2-succinylbenzoate (OSB). Catalyzes both N-succinylamino acid racemization and OSB synthesis at equivalent rates. However, NSAR activity is probably the protein's biological function, because menaquinone biosynthesis genes are missing in this species. This is N-succinylamino acid racemase from Thermus thermophilus (strain ATCC 27634 / DSM 579 / HB8).